A 299-amino-acid chain; its full sequence is Probable lipid kinase YegS (299 aa).

The 132-residue stretch at 2–133 folds into the DAGKc domain; that stretch reads ANFPDSLLIL…IDMARVNDKT (132 aa). Residues T40, 66–72, and T95 contribute to the ATP site; that span reads GDGTINE. 3 residues coordinate Mg(2+): L215, D218, and L220. E271 functions as the Proton acceptor in the catalytic mechanism.

Belongs to the diacylglycerol/lipid kinase family. YegS lipid kinase subfamily. Requires Mg(2+) as cofactor. Ca(2+) serves as cofactor.

The protein localises to the cytoplasm. Probably phosphorylates lipids; the in vivo substrate is unknown. This Salmonella arizonae (strain ATCC BAA-731 / CDC346-86 / RSK2980) protein is Probable lipid kinase YegS.